The sequence spans 542 residues: Putative serine/threonine-protein kinase L205 (542 aa).

Over residues phenylalanine 20–aspartate 30 the composition is skewed to basic and acidic residues. Positions phenylalanine 20–glutamate 49 are disordered. Over residues aspartate 31–glutamate 49 the composition is skewed to acidic residues. Residues tyrosine 69–leucine 538 enclose the Protein kinase domain. ATP is bound by residues isoleucine 75–valine 83 and lysine 98. Residue aspartate 201 is the Proton acceptor of the active site. The segment at glutamate 278–aspartate 314 is disordered. The segment covering threonine 295 to aspartate 314 has biased composition (acidic residues).

It belongs to the protein kinase superfamily. Ser/Thr protein kinase family.

It catalyses the reaction L-seryl-[protein] + ATP = O-phospho-L-seryl-[protein] + ADP + H(+). It carries out the reaction L-threonyl-[protein] + ATP = O-phospho-L-threonyl-[protein] + ADP + H(+). In Acanthamoeba polyphaga (Amoeba), this protein is Putative serine/threonine-protein kinase L205.